Reading from the N-terminus, the 391-residue chain is uncharacterized protein (391 aa).

The region spanning 247-387 (AVIVYATIYS…KIKEFGRKLA (141 aa)) is the Flavodoxin-like domain.

This is an uncharacterized protein from Methanocaldococcus jannaschii (strain ATCC 43067 / DSM 2661 / JAL-1 / JCM 10045 / NBRC 100440) (Methanococcus jannaschii).